The sequence spans 364 residues: DNA polymerase IV (364 aa).

The 185-residue stretch at 14–198 (IIHIDMDAFF…LPIEKFHGVG (185 aa)) folds into the UmuC domain. Aspartate 18 and aspartate 116 together coordinate Mg(2+). Glutamate 117 is an active-site residue.

It belongs to the DNA polymerase type-Y family. Monomer. It depends on Mg(2+) as a cofactor.

The protein resides in the cytoplasm. The enzyme catalyses DNA(n) + a 2'-deoxyribonucleoside 5'-triphosphate = DNA(n+1) + diphosphate. Poorly processive, error-prone DNA polymerase involved in untargeted mutagenesis. Copies undamaged DNA at stalled replication forks, which arise in vivo from mismatched or misaligned primer ends. These misaligned primers can be extended by PolIV. Exhibits no 3'-5' exonuclease (proofreading) activity. May be involved in translesional synthesis, in conjunction with the beta clamp from PolIII. This is DNA polymerase IV from Streptococcus pyogenes serotype M6 (strain ATCC BAA-946 / MGAS10394).